The chain runs to 285 residues: MEMO1 family protein Igni_0992 (285 aa).

Belongs to the MEMO1 family.

This is MEMO1 family protein Igni_0992 from Ignicoccus hospitalis (strain KIN4/I / DSM 18386 / JCM 14125).